Reading from the N-terminus, the 284-residue chain is Short-chain dehydrogenase RED1 (284 aa).

8 residues coordinate NADP(+): isoleucine 11, threonine 37, aspartate 58, asparagine 86, tyrosine 151, lysine 155, valine 184, and threonine 186. The Proton acceptor role is filled by tyrosine 151. Lysine 155 acts as the Lowers pKa of active site Tyr in catalysis.

The protein belongs to the short-chain dehydrogenases/reductases (SDR) family.

The protein operates within polyketide biosynthesis. Functionally, short-chain dehydrogenase; part of the gene cluster that mediates the biosynthesis of pyriculol and pyriculariol, two heptaketides that induce lesion formation upon application on rice leaves but are dispensable for pathogenicity. The highly reducing polyketide synthase synthesizes the heptaketide backbone of pyriculol and pyriculariol. Pyriculol and pyriculariol contain several hydroxyl moieties and double bonds, so it can be assumed that several reduction steps occur during biosynthesis. These reactions could be executed by PKS19 itself or partly by the tailoring enzymes OXR1, OXR2, RED1, RED2 or RED3, identified within the cluster. The FAD-linked oxidoreductase OXR1 is the only tailoring enzyme for which the function has been determined yet, and is involved in the oxidation of dihydropyriculol and dihydropyriculariol into pyriculol and pyriculariol, respectively. The sequence is that of Short-chain dehydrogenase RED1 from Pyricularia oryzae (strain 70-15 / ATCC MYA-4617 / FGSC 8958) (Rice blast fungus).